Here is a 343-residue protein sequence, read N- to C-terminus: MDQGQTLSVLLDSYAVDPQKKAVAAAVGAIAAGSIEISELIGQGALAGITGAAHGGSNADGDVQKDLDVKAEQIIVKSLKDVPYAALASEESDTLLDGDPNAPISIAYDPLDGSSNIDTNMTVGTIFSIIPNQPGVKPFTAAGSCQIAAGFVVYGPQTSLVLTLGDGVNIFTLDRKAKVYRLIRERVKVPADTAEYAVNASNHRHWEQPIRDFVDECIAGADGPRAKDFNMRWIGSLVAEVYRILTRGGVFLYPGDNRPGYGNGRLRLLYETHPMSFVMEQAGGAASTGRERVLDLTAKTIHQRSPLIMGSIDKVKRIELLHTDPSAASRSAPLFARRGLFRV.

Glutamate 90, aspartate 109, leucine 111, and aspartate 112 together coordinate Mg(2+). Residues 112–115 (DGSS) and asparagine 199 contribute to the substrate site. Glutamate 271 contributes to the Mg(2+) binding site.

It belongs to the FBPase class 1 family. As to quaternary structure, homotetramer. It depends on Mg(2+) as a cofactor.

The protein localises to the cytoplasm. The enzyme catalyses beta-D-fructose 1,6-bisphosphate + H2O = beta-D-fructose 6-phosphate + phosphate. Its pathway is carbohydrate biosynthesis; Calvin cycle. The sequence is that of Fructose-1,6-bisphosphatase class 1 from Rhodopseudomonas palustris (strain ATCC BAA-98 / CGA009).